The primary structure comprises 305 residues: Autophagy-related protein 27 (305 aa).

The first 22 residues, 1–22, serve as a signal peptide directing secretion; it reads MARYKGLSILSLFAVFSSLASA. The Lumenal portion of the chain corresponds to 23 to 242; the sequence is ELDCSNIKVD…EDGGSAPSGH (220 aa). The MRH domain occupies 24-231; sequence LDCSNIKVDG…EWKTKYACEN (208 aa). Disulfide bonds link C26/C66 and C74/C81. A glycan (N-linked (GlcNAc...) asparagine) is linked at N58. N-linked (GlcNAc...) asparagine glycosylation is present at N85. C156 and C229 are oxidised to a cystine. Positions 163–202 are disordered; that stretch reads LEGLESPKPDGDKKKDGEKKDDDKKDNKDKEGKSKRDGEE. The chain crosses the membrane as a helical span at residues 243-263; sequence WGFFTWVIVLYVVLVSLPLLS. Residues 264 to 305 are Cytoplasmic-facing; sequence ERVTNVRCHSQPVPVHFGLSDIRLVAQLQPVWSSRVGLASSQ.

Belongs to the ATG27 family.

It localises to the cytoplasmic vesicle membrane. The protein resides in the golgi apparatus membrane. Its subcellular location is the mitochondrion membrane. The protein localises to the preautophagosomal structure membrane. Effector of phosphatidylinositol 3-phosphate kinase signaling. Regulates the cytoplasm to vacuole transport (Cvt) vesicle formation. Plays a role in ATG protein retrieval from the pre-autophagosomal structure (PAS). The sequence is that of Autophagy-related protein 27 from Arthroderma benhamiae (strain ATCC MYA-4681 / CBS 112371) (Trichophyton mentagrophytes).